A 423-amino-acid chain; its full sequence is Glutamyl-tRNA(Gln) amidotransferase subunit A (423 aa).

Catalysis depends on charge relay system residues Lys28 and Ser103. The active-site Acyl-ester intermediate is Ser127.

This sequence belongs to the amidase family. GatA subfamily. Heterotrimer of A, B and C subunits.

The catalysed reaction is L-glutamyl-tRNA(Gln) + L-glutamine + ATP + H2O = L-glutaminyl-tRNA(Gln) + L-glutamate + ADP + phosphate + H(+). Its function is as follows. Allows the formation of correctly charged Gln-tRNA(Gln) through the transamidation of misacylated Glu-tRNA(Gln) in organisms which lack glutaminyl-tRNA synthetase. The reaction takes place in the presence of glutamine and ATP through an activated gamma-phospho-Glu-tRNA(Gln). This Halobacterium salinarum (strain ATCC 700922 / JCM 11081 / NRC-1) (Halobacterium halobium) protein is Glutamyl-tRNA(Gln) amidotransferase subunit A.